The sequence spans 96 residues: Putative pterin-4-alpha-carbinolamine dehydratase (96 aa).

This sequence belongs to the pterin-4-alpha-carbinolamine dehydratase family.

The enzyme catalyses (4aS,6R)-4a-hydroxy-L-erythro-5,6,7,8-tetrahydrobiopterin = (6R)-L-erythro-6,7-dihydrobiopterin + H2O. This is Putative pterin-4-alpha-carbinolamine dehydratase from Novosphingobium aromaticivorans (strain ATCC 700278 / DSM 12444 / CCUG 56034 / CIP 105152 / NBRC 16084 / F199).